The following is a 313-amino-acid chain: Holliday junction branch migration complex subunit RuvB (313 aa).

Residues 1 to 157 (MNEYIGQGNI…FGLIMELDFY (157 aa)) are large ATPase domain (RuvB-L). Residues Gly-38, Lys-41, Thr-42, Thr-43, 104 to 106 (EDF), Arg-147, Tyr-157, and Arg-194 each bind ATP. Thr-42 contacts Mg(2+). The tract at residues 158–228 (SIDELSKIIE…MVEEIMFLLG (71 aa)) is small ATPAse domain (RuvB-S). The head domain (RuvB-H) stretch occupies residues 231 to 313 (KEGLDELDRK…KVQRGLFDEE (83 aa)). The DNA site is built by Arg-286 and Arg-291.

Belongs to the RuvB family. As to quaternary structure, homohexamer. Forms an RuvA(8)-RuvB(12)-Holliday junction (HJ) complex. HJ DNA is sandwiched between 2 RuvA tetramers; dsDNA enters through RuvA and exits via RuvB. An RuvB hexamer assembles on each DNA strand where it exits the tetramer. Each RuvB hexamer is contacted by two RuvA subunits (via domain III) on 2 adjacent RuvB subunits; this complex drives branch migration. In the full resolvosome a probable DNA-RuvA(4)-RuvB(12)-RuvC(2) complex forms which resolves the HJ.

Its subcellular location is the cytoplasm. The catalysed reaction is ATP + H2O = ADP + phosphate + H(+). Its function is as follows. The RuvA-RuvB-RuvC complex processes Holliday junction (HJ) DNA during genetic recombination and DNA repair, while the RuvA-RuvB complex plays an important role in the rescue of blocked DNA replication forks via replication fork reversal (RFR). RuvA specifically binds to HJ cruciform DNA, conferring on it an open structure. The RuvB hexamer acts as an ATP-dependent pump, pulling dsDNA into and through the RuvAB complex. RuvB forms 2 homohexamers on either side of HJ DNA bound by 1 or 2 RuvA tetramers; 4 subunits per hexamer contact DNA at a time. Coordinated motions by a converter formed by DNA-disengaged RuvB subunits stimulates ATP hydrolysis and nucleotide exchange. Immobilization of the converter enables RuvB to convert the ATP-contained energy into a lever motion, pulling 2 nucleotides of DNA out of the RuvA tetramer per ATP hydrolyzed, thus driving DNA branch migration. The RuvB motors rotate together with the DNA substrate, which together with the progressing nucleotide cycle form the mechanistic basis for DNA recombination by continuous HJ branch migration. Branch migration allows RuvC to scan DNA until it finds its consensus sequence, where it cleaves and resolves cruciform DNA. The chain is Holliday junction branch migration complex subunit RuvB from Thermosipho melanesiensis (strain DSM 12029 / CIP 104789 / BI429).